The chain runs to 104 residues: Large ribosomal subunit protein uL24 (104 aa).

This sequence belongs to the universal ribosomal protein uL24 family. As to quaternary structure, part of the 50S ribosomal subunit.

Functionally, one of two assembly initiator proteins, it binds directly to the 5'-end of the 23S rRNA, where it nucleates assembly of the 50S subunit. One of the proteins that surrounds the polypeptide exit tunnel on the outside of the subunit. In Cronobacter sakazakii (strain ATCC BAA-894) (Enterobacter sakazakii), this protein is Large ribosomal subunit protein uL24.